Here is a 262-residue protein sequence, read N- to C-terminus: Hemin import ATP-binding protein HmuV (262 aa).

The ABC transporter domain maps to 3–244; that stretch reads LQARNLTLAR…DHMRRVYGIE (242 aa). Residue 35 to 42 coordinates ATP; the sequence is GANGAGKS.

It belongs to the ABC transporter superfamily. Heme (hemin) importer (TC 3.A.1.14.5) family. As to quaternary structure, the complex is composed of two ATP-binding proteins (HmuV), two transmembrane proteins (HmuU) and a solute-binding protein (HmuT).

It localises to the cell inner membrane. Its function is as follows. Part of the ABC transporter complex HmuTUV involved in hemin import. Responsible for energy coupling to the transport system. The chain is Hemin import ATP-binding protein HmuV from Bordetella bronchiseptica (strain ATCC BAA-588 / NCTC 13252 / RB50) (Alcaligenes bronchisepticus).